We begin with the raw amino-acid sequence, 656 residues long: Chaperone protein HtpG (656 aa).

The tract at residues 1–364 is a; substrate-binding; the sequence is MSEQNPTDSK…SADLPLNVSR (364 aa). Residues 365–583 are b; that stretch reads EILQESRDVK…EGELSPQMIQ (219 aa). A c region spans residues 584 to 656; the sequence is MLKQMGQDVP…LRRVNELLMK (73 aa).

This sequence belongs to the heat shock protein 90 family. As to quaternary structure, homodimer.

The protein resides in the cytoplasm. In terms of biological role, molecular chaperone. Has ATPase activity. The chain is Chaperone protein HtpG from Psychrobacter arcticus (strain DSM 17307 / VKM B-2377 / 273-4).